A 309-amino-acid polypeptide reads, in one-letter code: Aspartate carbamoyltransferase catalytic subunit (309 aa).

Positions 58 and 59 each coordinate carbamoyl phosphate. Residue Lys86 coordinates L-aspartate. Residues Arg108, His136, and Gln139 each contribute to the carbamoyl phosphate site. The L-aspartate site is built by Arg169 and Arg223. The carbamoyl phosphate site is built by Gly264 and Pro265.

Belongs to the aspartate/ornithine carbamoyltransferase superfamily. ATCase family. Heterododecamer (2C3:3R2) of six catalytic PyrB chains organized as two trimers (C3), and six regulatory PyrI chains organized as three dimers (R2).

It carries out the reaction carbamoyl phosphate + L-aspartate = N-carbamoyl-L-aspartate + phosphate + H(+). Its pathway is pyrimidine metabolism; UMP biosynthesis via de novo pathway; (S)-dihydroorotate from bicarbonate: step 2/3. Its function is as follows. Catalyzes the condensation of carbamoyl phosphate and aspartate to form carbamoyl aspartate and inorganic phosphate, the committed step in the de novo pyrimidine nucleotide biosynthesis pathway. The chain is Aspartate carbamoyltransferase catalytic subunit from Pelotomaculum thermopropionicum (strain DSM 13744 / JCM 10971 / SI).